Reading from the N-terminus, the 197-residue chain is Holliday junction branch migration complex subunit RuvA (197 aa).

The tract at residues 1–64 is domain I; the sequence is MYDYIKGIYK…DDSINLYGFF (64 aa). Residues 65–143 are domain II; it reads TEEERDMFNL…NDDIISDIDD (79 aa). The interval 144–154 is flexible linker; the sequence is LDSISNFQLHS. The domain III stretch occupies residues 154–197; it reads SAEALEALMSLGYSQKESEKALKNVDKENSLEDIIKACLKYLMG.

It belongs to the RuvA family. In terms of assembly, homotetramer. Forms an RuvA(8)-RuvB(12)-Holliday junction (HJ) complex. HJ DNA is sandwiched between 2 RuvA tetramers; dsDNA enters through RuvA and exits via RuvB. An RuvB hexamer assembles on each DNA strand where it exits the tetramer. Each RuvB hexamer is contacted by two RuvA subunits (via domain III) on 2 adjacent RuvB subunits; this complex drives branch migration. In the full resolvosome a probable DNA-RuvA(4)-RuvB(12)-RuvC(2) complex forms which resolves the HJ.

The protein localises to the cytoplasm. Its function is as follows. The RuvA-RuvB-RuvC complex processes Holliday junction (HJ) DNA during genetic recombination and DNA repair, while the RuvA-RuvB complex plays an important role in the rescue of blocked DNA replication forks via replication fork reversal (RFR). RuvA specifically binds to HJ cruciform DNA, conferring on it an open structure. The RuvB hexamer acts as an ATP-dependent pump, pulling dsDNA into and through the RuvAB complex. HJ branch migration allows RuvC to scan DNA until it finds its consensus sequence, where it cleaves and resolves the cruciform DNA. The polypeptide is Holliday junction branch migration complex subunit RuvA (Clostridium tetani (strain Massachusetts / E88)).